The following is a 124-amino-acid chain: Ribonuclease pancreatic (124 aa).

The segment covering 1-13 (KESAAAKFERQHI) has biased composition (basic and acidic residues). Positions 1–23 (KESAAAKFERQHIDSSTSSVSSS) are disordered. 2 residues coordinate substrate: Lys7 and Arg10. Catalysis depends on His12, which acts as the Proton acceptor. 4 disulfide bridges follow: Cys26-Cys84, Cys40-Cys95, Cys58-Cys110, and Cys65-Cys72. N-linked (GlcNAc...) asparagine glycosylation is present at Asn34. Substrate contacts are provided by residues 41-45 (KPVNT), Lys66, and Arg85. Residue His119 is the Proton donor of the active site.

The protein belongs to the pancreatic ribonuclease family. In terms of assembly, monomer. Interacts with and forms tight 1:1 complexes with RNH1. Dimerization of two such complexes may occur. Interaction with RNH1 inhibits this protein. Pancreas.

Its subcellular location is the secreted. It carries out the reaction an [RNA] containing cytidine + H2O = an [RNA]-3'-cytidine-3'-phosphate + a 5'-hydroxy-ribonucleotide-3'-[RNA].. The catalysed reaction is an [RNA] containing uridine + H2O = an [RNA]-3'-uridine-3'-phosphate + a 5'-hydroxy-ribonucleotide-3'-[RNA].. Its function is as follows. Endonuclease that catalyzes the cleavage of RNA on the 3' side of pyrimidine nucleotides. Acts on single-stranded and double-stranded RNA. The chain is Ribonuclease pancreatic (RNASE1) from Giraffa camelopardalis (Giraffe).